We begin with the raw amino-acid sequence, 207 residues long: Large ribosomal subunit protein uL4 (207 aa).

Positions 49 to 78 are disordered; it reads HAVKNRSAVSGGGRKPWRQKGTGRARQGSI.

This sequence belongs to the universal ribosomal protein uL4 family. In terms of assembly, part of the 50S ribosomal subunit.

Functionally, one of the primary rRNA binding proteins, this protein initially binds near the 5'-end of the 23S rRNA. It is important during the early stages of 50S assembly. It makes multiple contacts with different domains of the 23S rRNA in the assembled 50S subunit and ribosome. Forms part of the polypeptide exit tunnel. This Streptococcus sanguinis (strain SK36) protein is Large ribosomal subunit protein uL4.